The chain runs to 374 residues: Alanine racemase (374 aa).

Lysine 40 functions as the Proton acceptor; specific for D-alanine in the catalytic mechanism. The residue at position 40 (lysine 40) is an N6-(pyridoxal phosphate)lysine. Substrate is bound at residue arginine 136. The active-site Proton acceptor; specific for L-alanine is tyrosine 264. Methionine 311 contacts substrate.

Belongs to the alanine racemase family. Requires pyridoxal 5'-phosphate as cofactor.

It catalyses the reaction L-alanine = D-alanine. It participates in amino-acid biosynthesis; D-alanine biosynthesis; D-alanine from L-alanine: step 1/1. Catalyzes the interconversion of L-alanine and D-alanine. May also act on other amino acids. This is Alanine racemase (alr) from Pediococcus pentosaceus (strain ATCC 25745 / CCUG 21536 / LMG 10740 / 183-1w).